Here is a 710-residue protein sequence, read N- to C-terminus: Polyribonucleotide nucleotidyltransferase (710 aa).

Positions 488 and 494 each coordinate Mg(2+). A KH domain is found at 555–614 (PRIETITIPTDKIRDVIGSGGKVIREIVETTGAKVDVNDDGVIKVSSSDGASIKAALDWI). Positions 624-692 (GQIYKGKVVK…DRGKVRLSMK (69 aa)) constitute an S1 motif domain.

It belongs to the polyribonucleotide nucleotidyltransferase family. It depends on Mg(2+) as a cofactor.

The protein localises to the cytoplasm. It catalyses the reaction RNA(n+1) + phosphate = RNA(n) + a ribonucleoside 5'-diphosphate. Involved in mRNA degradation. Catalyzes the phosphorolysis of single-stranded polyribonucleotides processively in the 3'- to 5'-direction. This Maricaulis maris (strain MCS10) (Caulobacter maris) protein is Polyribonucleotide nucleotidyltransferase.